Consider the following 299-residue polypeptide: GTPase Era (299 aa).

The region spanning Arg-5–Pro-175 is the Era-type G domain. A G1 region spans residues Gly-13–Ser-20. Residue Gly-13 to Ser-20 coordinates GTP. The segment at Gln-39–His-43 is G2. Positions Asp-60–Gly-63 are G3. Residues Asp-60–Leu-64 and Thr-124–Asp-127 each bind GTP. The segment at Thr-124–Asp-127 is G4. A G5 region spans residues Val-154–Ala-156. The 80-residue stretch at Val-206 to Lys-285 folds into the KH type-2 domain.

The protein belongs to the TRAFAC class TrmE-Era-EngA-EngB-Septin-like GTPase superfamily. Era GTPase family. Monomer.

Its subcellular location is the cell envelope. The protein resides in the secreted. It is found in the cell wall. In terms of biological role, exhibits GTPase activity. Binds RNA but is probably not involved in ribosome assembly in mycobacteria. This chain is GTPase Era, found in Mycobacterium sp. (strain KMS).